Reading from the N-terminus, the 407-residue chain is Protoasukamycin 4-monooxygenase (407 aa).

Does not interact with AsuE2, suggesting a possible transient interaction between the two enzymes instead of formation of a stable complex. The cofactor is FMN. FAD serves as cofactor. Requires riboflavin as cofactor.

The catalysed reaction is protoasukamycin + NADH + O2 + H(+) = 4-hydroxyprotoasukamycin + NAD(+) + H2O. It participates in antibiotic biosynthesis. Its activity is regulated as follows. When flavin concentration is low, activity is enhanced by the presence of the NADH-dependent flavin reductase AsuE2. In the presence of abundant flavin, activity of AsuE1 is not affected by AsuE2. Involved in the biosynthesis of the antibiotic asukamycin. Catalyzes the conversion of protoasukamycin to 4-hydroxyprotoasukamycin. Can also convert some protoasukamycin derivatives into their corresponding 4-hydroxyprotoasukamycin derivatives. Can also use NADPH, but catalytic efficiency is 50-fold higher with NADH. The chain is Protoasukamycin 4-monooxygenase from Streptomyces nodosus subsp. asukaensis.